Consider the following 688-residue polypeptide: Elongation factor G (688 aa).

Residues 8 to 282 enclose the tr-type G domain; sequence EKTRNIGIIA…AIVDYLPAPC (275 aa). GTP is bound by residues 17–24, 81–85, and 135–138; these read AHIDAGKT, DTPGH, and NKMD.

It belongs to the TRAFAC class translation factor GTPase superfamily. Classic translation factor GTPase family. EF-G/EF-2 subfamily.

The protein localises to the cytoplasm. Functionally, catalyzes the GTP-dependent ribosomal translocation step during translation elongation. During this step, the ribosome changes from the pre-translocational (PRE) to the post-translocational (POST) state as the newly formed A-site-bound peptidyl-tRNA and P-site-bound deacylated tRNA move to the P and E sites, respectively. Catalyzes the coordinated movement of the two tRNA molecules, the mRNA and conformational changes in the ribosome. This Onion yellows phytoplasma (strain OY-M) protein is Elongation factor G.